The primary structure comprises 465 residues: Ribulose bisphosphate carboxylase large chain (465 aa).

Position 4 is an N6,N6,N6-trimethyllysine (Lys4). Residues Asn113 and Thr163 each contribute to the substrate site. The Proton acceptor role is filled by Lys165. Lys167 contacts substrate. Residues Lys191, Asp193, and Glu194 each contribute to the Mg(2+) site. Lys191 carries the post-translational modification N6-carboxylysine. His284 (proton acceptor) is an active-site residue. Positions 285, 317, and 369 each coordinate substrate.

It belongs to the RuBisCO large chain family. Type I subfamily. Heterohexadecamer of 8 large chains and 8 small chains; disulfide-linked. The disulfide link is formed within the large subunit homodimers. The cofactor is Mg(2+). The disulfide bond which can form in the large chain dimeric partners within the hexadecamer appears to be associated with oxidative stress and protein turnover.

The protein resides in the plastid. Its subcellular location is the chloroplast. The catalysed reaction is 2 (2R)-3-phosphoglycerate + 2 H(+) = D-ribulose 1,5-bisphosphate + CO2 + H2O. It catalyses the reaction D-ribulose 1,5-bisphosphate + O2 = 2-phosphoglycolate + (2R)-3-phosphoglycerate + 2 H(+). Functionally, ruBisCO catalyzes two reactions: the carboxylation of D-ribulose 1,5-bisphosphate, the primary event in carbon dioxide fixation, as well as the oxidative fragmentation of the pentose substrate in the photorespiration process. Both reactions occur simultaneously and in competition at the same active site. This is Ribulose bisphosphate carboxylase large chain from Cyrilla racemiflora (Swamp titi).